Here is a 4171-residue protein sequence, read N- to C-terminus: Cytoplasmic dynein 2 heavy chain 1 (4171 aa).

The tract at residues 1-1598 is stem; the sequence is MSSDSKDQRK…VLRQVSSEFE (1598 aa). An ATP-binding site is contributed by 115-122; that stretch reads GKELTEGN. Coiled coils occupy residues 164 to 203, 629 to 693, 829 to 861, 927 to 1048, and 1354 to 1383; these read ANDY…CDEL, KQLE…KEEE, DLEE…AERL, EIAE…KEKR, and SRQS…LEQK. AAA regions lie at residues 1599–1823, 1883–2100, 2184–2432, and 2527–2767; these read YTYE…VLGG, EPLG…VRSH, VTKE…WVVS, and RFAF…PIKY. Residues 1637-1644, 1921-1928, 2226-2233, and 2565-2572 contribute to the ATP site; these read GPAGTGKT, GAAGSGKS, GTTGCGKQ, and GRPGFGRR. Positions 2776-3064 are stalk; that stretch reads QLLGYKRLTL…VDLDREQDTI (289 aa). Coiled coils occupy residues 2790–2877, 2999–3059, and 3308–3336; these read ERLK…KEVQ, EKIA…DLDR, and ELEE…LLLQ. AAA stretches follow at residues 3140 to 3367 and 3575 to 3784; these read ASLE…IITK and LMDF…FVEQ.

This sequence belongs to the dynein heavy chain family. In terms of assembly, the cytoplasmic dynein complex 2 is probably composed by a heavy chain che-3 homodimer and a number of light intermediate chains.

The protein resides in the cell projection. The protein localises to the cilium membrane. It is found in the cytoplasm. It localises to the cytoskeleton. Its function is as follows. Functions as a motor for intraflagellar retrograde transport in chemosensory neurons. Functions in cilia biogenesis. In Caenorhabditis elegans, this protein is Cytoplasmic dynein 2 heavy chain 1.